Consider the following 1703-residue polypeptide: MAQIASGVNEIKSNLGDIRKLINQNAQYDQKKEYQVQVTIIEARGLIAKDADGSDPYVKIFVGKLPPQVTNTKSNASTVVFNQSFTFKDLFLNQIELENQEITLQVIDQNQFATNPLIGQQSIGLSTLYRSNNHEFFKTWLTLIHPDQGIEPQGYLLVSCYIIGTEDRPPVHDINEAKEDDDDGCSFLNIPDEELNDEQRKKKAIWKQPVVPINMPLNKREQYQLLVSIVKGEDLPILTGSTCDSFIACRVGSNVLRTMTVKNSQKPNFQTKMVFPVFFPVYNDKIVIRVWDSRTLRSDNFIAAIPEKPNENDWFNINTLHSRGGTMSFRWFHLYGVPLPERPEGMIDEVVKKLTKQVEGTMYMGRILLSLSLSPNEKAELGLQSLGGYKEPPILKYIIRCDTFELQSSFDCGQYIMIEINFGGQVIRSNLCQKRVDSHEKQKNNQQSSRTRELNQYIWKDSKSQIKDELQIDIPFDQSQQPDVIVSLYSVTPNKKTLDYDVGDMKRQAYIRIKPTSRELEHEQPKWYQLKPVKYKTIQEVHSHLLMNVELKTEMVAKQKTRHPIKRSLKQMYQFKGYLWGGYDLLPSHHSDDTCIKAQLQIGTRIIDVVTGRKGKNVIWNHSLEFLIELDEKLEFSSNILVSFYNKKSSDEEFIGQIAIKAVACEVKIDNKQINIPPPKPKYQFYHIVQEGKSNGRILAAFQLQRSEKTFNQNNDVNEPKYDKILKDQDFKYVQVKFPLIGVRNLPEGIRDPEFVFRIPQPDLKFVITLEERKQRKELTRNYYYEKIITLKNNEEEQEQAEQKKTIGGKIFTMIAEQQKVALKNINFCTILENDISECLKIPVDLQFTPILELEIRDRAAAIKTVRYHSSISLIDYIPWGDVGTKNAKIEFFEIGKLNLMLLQDEDQDAVQNQFNDDDEGDNEDEQDSRENDFDDNRDANLIFTEQFREEVDQQNQNSDDKRRLLSNKNLDKLDGDDQPQSLKNLQNLDSLSKADQKSQFDLKSESKSRATGKTKTSKKSTSSTARKLLLQQKLFESTQTFFNAEFNPSVEFTKSLIDEANFKLEREQKIQKLADLVFELKKMKKKDEGREKQLLREIEDLKNYLVKENIFLEQGDDGAQENFDYGREIVRVPLQDQLEKGLPYKKFRLYMYGNNTHDIGIPTAAVIKAHLKVLEHDIEIIKQRKTQIRETLKNKSNRSSMSLSMRSSIQSNTFKSSRKTSRSQKLGENKPLVSYECEGDDQRFPFDIFKKTFLEFFQKQFELKTRVYLLRCTNISAQASKIEAYHLLAGEAAVCSASSYPWVIVGDGENRGKNIIKNIKDDANIAVDTLNPEFFKMYELDATLPEDWNLVVKIMNKGTAIDALIGQFEIDLEDRVLGQKELRRRIAYQTYIEYFREKCEQYKYNYEIGDKKKNYEIKINELITKIEALDRNLKLPVEYLELKHPEKNTCQGTIEFFLEPFPFDVARIIPPSTIEKPQPMEFEIRLIIWETFDIPISNPIQKSTVDIFLTVSLDSTANIKGEEIVKETDVHFGSENGNGVFNYRMVFPLVIPCSFPRLRLQVSDFSTVGSNESLGETVITLRKALKKLKEGIVFQMPTTKFKFEHPNYPGQDRGCVSISMKIINKQAAESDPVGEGQNEPNKDPILEKPKEGRNVGDFLKGTALDFSAWSFFGLTALKYFAGIFVSIVTMMILFVKPGILVN.

2 consecutive C2 domains span residues 18–141 and 207–332; these read IRKL…KTWL and KQPV…FRWF. 3 disordered regions span residues 913–937, 970–1025, and 1194–1228; these read NQFN…FDDN, NLDK…TSST, and KNKS…QKLG. The span at 916 to 928 shows a compositional bias: acidic residues; it reads NDDDEGDNEDEQD. Over residues 979–991 the composition is skewed to polar residues; sequence QPQSLKNLQNLDS. The span at 993–1009 shows a compositional bias: basic and acidic residues; it reads SKADQKSQFDLKSESKS. The segment covering 1198–1209 has biased composition (low complexity); that stretch reads NRSSMSLSMRSS. Residues 1466–1595 form the C2 3 domain; it reads VARIIPPSTI…LKKLKEGIVF (130 aa). The interval 1628 to 1651 is disordered; that stretch reads AAESDPVGEGQNEPNKDPILEKPK. Positions 1641-1651 are enriched in basic and acidic residues; sequence PNKDPILEKPK. A helical membrane pass occupies residues 1681-1701; it reads FAGIFVSIVTMMILFVKPGIL.

Belongs to the ferlin family.

It localises to the membrane. Regulates mucocyst exocytosis. The protein is Ferlin 2 of Tetrahymena thermophila (strain SB210).